The sequence spans 239 residues: Sensory rhodopsin-2 (239 aa).

Residues 1–3 (MVG) lie on the Extracellular side of the membrane. Residues 4–25 (LTTLFWLGAIGMLVGTLAFAWA) traverse the membrane as a helical segment. The Cytoplasmic portion of the chain corresponds to 26–33 (GRDAGSGE). Residues 34–55 (RRYYVTLVGISGIAAVAYVVMA) traverse the membrane as a helical segment. Topologically, residues 56-69 (LGVGWVPVAERTVF) are extracellular. Residues 70–91 (APRYIDWILTTPLIVYFLGLLA) form a helical membrane-spanning segment. At 92-94 (GLD) the chain is on the cytoplasmic side. A helical transmembrane segment spans residues 95–117 (SREFGIVITLNTVVMLAGFAGAM). At 118–121 (VPGI) the chain is on the extracellular side. Residues 122-149 (ERYALFGMGAVAFLGLVYYLVGPMTESA) traverse the membrane as a helical segment. Residues 150–153 (SQRS) lie on the Cytoplasmic side of the membrane. A helical transmembrane segment spans residues 154-181 (SGIKSLYVRLRNLTVILWAIYPFIWLLG). Residues 182-189 (PPGVALLT) lie on the Extracellular side of the membrane. A helical membrane pass occupies residues 190–222 (PTVDVALIVYLDLVTKVGFGFIALDAAATLRAE). K205 is modified (N6-(retinylidene)lysine). Residues 223-239 (HGESLAGVDTDAPAVAD) are Cytoplasmic-facing.

This sequence belongs to the archaeal/bacterial/fungal opsin family. As to quaternary structure, homodimer. Interacts with HTR-II.

The protein resides in the cell membrane. Photophobic photoreceptor responsible for the negative phototaxis. Activates the sensory rhodopsin II transducer (HTR-II) in response to blue light. This is Sensory rhodopsin-2 (sop2) from Natronomonas pharaonis (Natronobacterium pharaonis).